The sequence spans 120 residues: Vanadium-binding protein 2 (120 aa).

Residues 1–20 (MSKVIFALVLVVVLVACINA) form the signal peptide. Residues 21–29 (TYVEFEEAY) constitute a propeptide that is removed on maturation. 9 disulfide bridges follow: C34–C88, C38–C84, C42–C81, C48–C74, C52–C69, C56–C65, C92–C119, C97–C114, and C101–C111.

Interacts with VIP1. In terms of tissue distribution, expressed in vanadocytes.

Its subcellular location is the cytoplasm. Acts as a vanadium reductase which may form an electron transfer cascade in conjunction with NADPH and glutathione through thiol disulfide exchange reactions. Partial cleavage of its disulfide bonds results in the reduction of V(5+) to V(4+). Binds up to 24 V(4+) ions per protein at pH 7.5. Also binds Fe(3+) and Cu(2+) and, to a lesser extent, Co(2+), Zn(2+) and Ni(2+). The polypeptide is Vanadium-binding protein 2 (Ascidia sydneiensis samea (Vanadium-rich ascidian)).